The sequence spans 451 residues: Chromosomal replication initiator protein DnaA 2 (451 aa).

Residues 1 to 68 (MQAWEEFLKA…QQKFINGNNK (68 aa)) form a domain I, interacts with DnaA modulators region. The domain II stretch occupies residues 68–104 (KRIKIHLSVANTPQRAKKTKTANKEKDFKAPFELTFD). The segment at 105–326 (ELDPLCLFPY…KGLEALVLRL (222 aa)) is domain III, AAA+ region. The ATP site is built by Gly-156, Gly-158, Lys-159, and Thr-160. Residues 327-451 (HLDAKHSITA…CHIILKKLQG (125 aa)) form a domain IV, binds dsDNA region.

The protein belongs to the DnaA family. Oligomerizes as a right-handed, spiral filament on DNA at oriC.

The protein resides in the cytoplasm. Its function is as follows. Plays an essential role in the initiation and regulation of chromosomal replication. ATP-DnaA binds to the origin of replication (oriC) to initiate formation of the DNA replication initiation complex once per cell cycle. Binds the DnaA box (a 9 base pair repeat at the origin) and separates the double-stranded (ds)DNA. Forms a right-handed helical filament on oriC DNA; dsDNA binds to the exterior of the filament while single-stranded (ss)DNA is stabiized in the filament's interior. The ATP-DnaA-oriC complex binds and stabilizes one strand of the AT-rich DNA unwinding element (DUE), permitting loading of DNA polymerase. After initiation quickly degrades to an ADP-DnaA complex that is not apt for DNA replication. Binds acidic phospholipids. The polypeptide is Chromosomal replication initiator protein DnaA 2 (Protochlamydia amoebophila (strain UWE25)).